Consider the following 907-residue polypeptide: Eukaryotic translation initiation factor 4 gamma 2 (907 aa).

An N-acetylmethionine modification is found at Met1. A disordered region spans residues 1–71 (MESAIAEGGA…SAANNSANEK (71 aa)). Phosphoserine is present on Ser11. The 231-residue stretch at 78–308 (FRKVRGILNK…QDTVELREHH (231 aa)) folds into the MIF4G domain. Residue Thr89 is modified to Phosphothreonine. The residue at position 360 (Arg360) is an Omega-N-methylarginine. Residue Ser395 is modified to Phosphoserine. Lys431 is modified (N6-methyllysine). Ser443 carries the post-translational modification Phosphoserine. Positions 498–541 (PPSAQPPRTQTPPLGQTPQLGLKTNPPLIQEKPAKTSKKPPPSK) are disordered. Residues 503–516 (PPRTQTPPLGQTPQ) show a composition bias toward polar residues. Arg505 bears the Omega-N-methylarginine mark. Phosphothreonine occurs at positions 508 and 514. An MI domain is found at 543-666 (ELLKLTETVV…SISELAQPLE (124 aa)). Residue Lys575 forms a Glycyl lysine isopeptide (Lys-Gly) (interchain with G-Cter in SUMO2) linkage. The W2 domain occupies 720–904 (EGKGLSFLFP…ETAEEEESEE (185 aa)). Ser902 bears the Phosphoserine mark.

This sequence belongs to the eukaryotic initiation factor 4G family. As to quaternary structure, interacts with the serine/threonine protein kinases MKNK1 and MKNK2. Binds EIF4A and EIF3. Interacts with MIF4GD. Interacts with DAZAP2. In terms of processing, phosphorylation; hyperphosphorylated during mitosis.

Functionally, appears to play a role in the switch from cap-dependent to IRES-mediated translation during mitosis, apoptosis and viral infection. Cleaved by some caspases and viral proteases. This Oryctolagus cuniculus (Rabbit) protein is Eukaryotic translation initiation factor 4 gamma 2.